The sequence spans 480 residues: ATP-dependent rRNA helicase RRP3 (480 aa).

2 stretches are compositionally biased toward basic and acidic residues: residues 1–17 (MAKA…KEES) and 33–46 (DTTK…EPKK). Positions 1–63 (MAKATEKRVK…VEVDESEEQT (63 aa)) are disordered. The Q motif motif lies at 64 to 92 (KTFKDLGVIDSICETCEELKFTKPTPIQA). Residues 95-266 (IPYALEGRDI…RASLVDPVRV (172 aa)) form the Helicase ATP-binding domain. 108–115 (AQTGSGKT) contributes to the ATP binding site. The DEAD box signature appears at 214 to 217 (DEAD). The Helicase C-terminal domain maps to 277-437 (NLLQYMVFCP…SYPLESEAVM (161 aa)). Residues 450-480 (AIQEMKGEDGTKKRSKFDKKRRRDEMDIGEQ) are disordered. The segment covering 462–471 (KRSKFDKKRR) has biased composition (basic residues).

It belongs to the DEAD box helicase family. DDX47/RRP3 subfamily. As to quaternary structure, interacts with the SSU processome.

It localises to the nucleus. It catalyses the reaction ATP + H2O = ADP + phosphate + H(+). Functionally, ATP-dependent rRNA helicase required for pre-ribosomal RNA processing. Involved in the maturation of the 35S-pre-rRNA and to its cleavage to mature 18S rRNA. This chain is ATP-dependent rRNA helicase RRP3, found in Yarrowia lipolytica (strain CLIB 122 / E 150) (Yeast).